Consider the following 117-residue polypeptide: Putative membrane protein insertion efficiency factor (117 aa).

It belongs to the UPF0161 family.

The protein resides in the cell inner membrane. Its function is as follows. Could be involved in insertion of integral membrane proteins into the membrane. The polypeptide is Putative membrane protein insertion efficiency factor (Helicobacter pylori (strain ATCC 700392 / 26695) (Campylobacter pylori)).